A 194-amino-acid chain; its full sequence is Fibroblast growth factor 7 (194 aa).

The signal sequence occupies residues 1 to 31 (MRKWILTWILPTLLYRSCFHIICLVGTISLA). N-linked (GlcNAc...) asparagine glycosylation occurs at Asn-45.

This sequence belongs to the heparin-binding growth factors family. As to quaternary structure, interacts with FGFBP1. Interacts with FGFR2. Affinity between fibroblast growth factors (FGFs) and their receptors is increased by heparan sulfate glycosaminoglycans that function as coreceptors.

The protein localises to the secreted. Plays an important role in the regulation of embryonic development, cell proliferation and cell differentiation. Required for normal branching morphogenesis. Growth factor active on keratinocytes. Possible major paracrine effector of normal epithelial cell proliferation. The polypeptide is Fibroblast growth factor 7 (FGF7) (Canis lupus familiaris (Dog)).